The primary structure comprises 272 residues: Outer surface protein A (272 aa).

Positions 1–16 are cleaved as a signal peptide; it reads MKKYLLGIGLILALIA. Residue Cys17 is the site of N-palmitoyl cysteine attachment. Cys17 is lipidated: S-diacylglycerol cysteine.

Belongs to the OspA lipoprotein family.

It localises to the cell outer membrane. The protein resides in the cell surface. In Borreliella burgdorferi (Lyme disease spirochete), this protein is Outer surface protein A.